Here is a 271-residue protein sequence, read N- to C-terminus: MTYLQEASRNAVTVPKLQAMRDAGEKIAMLTCYDASFAALLDRAGVDVLLIGDSLGNVLQGQTTTLPVSLADIAYHTASVARARPAALIVADLPFGTYGTPEDAFRSSVELMRAGAQMVKLEGGEWLADTVRFLVERSIPVCAHVGLTPQSVHAFGGFKVQGKTEAGATQLLRDSLAVQAAGAQLIVMEAIPTLLASDATKQLRIPTIGIGAGLDCSGQVLVLHDMLGIFPGKRPRFVKDFMQGQPSILAAVEAYVAAVKDGSFPGPEHTF.

Mg(2+) contacts are provided by Asp53 and Asp92. Residues Asp53–Ser54, Asp92, and Lys120 each bind 3-methyl-2-oxobutanoate. Residue Glu122 coordinates Mg(2+). Glu189 functions as the Proton acceptor in the catalytic mechanism.

This sequence belongs to the PanB family. As to quaternary structure, homodecamer; pentamer of dimers. Mg(2+) serves as cofactor.

The protein resides in the cytoplasm. It carries out the reaction 3-methyl-2-oxobutanoate + (6R)-5,10-methylene-5,6,7,8-tetrahydrofolate + H2O = 2-dehydropantoate + (6S)-5,6,7,8-tetrahydrofolate. It participates in cofactor biosynthesis; (R)-pantothenate biosynthesis; (R)-pantoate from 3-methyl-2-oxobutanoate: step 1/2. In terms of biological role, catalyzes the reversible reaction in which hydroxymethyl group from 5,10-methylenetetrahydrofolate is transferred onto alpha-ketoisovalerate to form ketopantoate. The chain is 3-methyl-2-oxobutanoate hydroxymethyltransferase from Paraburkholderia xenovorans (strain LB400).